A 196-amino-acid chain; its full sequence is MNEAVSPGALSTLFTDARTHNGWRETPVSDETLRELYAPIKWGPTSANCSPARIVFIRTVEGKERLHPALSSGNLQKTLTAPVTAIVAWDSEFYERLPLLFPHGDARSWFTSSPQLAEETAFRNSSMQAAYLIVACRALGLDTGPMSGFDRQHVDDAFFAGSTLKSNLLINIGYGDSSKLFARLPRLSFEEACGLL.

The protein belongs to the nitroreductase family. HadB/RutE subfamily. Requires FMN as cofactor.

The enzyme catalyses 3-hydroxypropanoate + NADP(+) = 3-oxopropanoate + NADPH + H(+). In terms of biological role, may reduce toxic product malonic semialdehyde to 3-hydroxypropionic acid, which is excreted. The chain is Probable malonic semialdehyde reductase RutE from Shigella sonnei (strain Ss046).